A 131-amino-acid polypeptide reads, in one-letter code: Hypocretin neuropeptide precursor (131 aa).

The signal sequence occupies residues methionine 1–alanine 33. A Pyrrolidone carboxylic acid modification is found at glutamine 34. 2 disulfide bridges follow: cysteine 39–cysteine 45 and cysteine 40–cysteine 47. Position 66 is a leucine amide (leucine 66). A Methionine amide modification is found at methionine 97. A propeptide spans glycine 98–isoleucine 131 (removed in mature form).

Belongs to the orexin family. In terms of processing, specific enzymatic cleavages at paired basic residues yield the different active peptides.

Its subcellular location is the rough endoplasmic reticulum. It is found in the cytoplasmic vesicle. It localises to the synapse. Its function is as follows. Neuropeptides that play a significant role in the regulation of food intake and sleep-wakefulness, possibly by coordinating the complex behavioral and physiologic responses of these complementary homeostatic functions. A broader role in the homeostatic regulation of energy metabolism, autonomic function, hormonal balance and the regulation of body fluids, is also suggested. Functionally, binds to orexin receptors HCRTR1/OX1R and HCRTR2/OX2R with a high affinity. Stimulates food intake. Modulates pituitary luteinizing hormone secretion in an ovarian steroid-dependent manner. In terms of biological role, binds to orexin receptor HCRTR2/OX2R only. Stimulates food intake. Modulates pituitary luteinizing hormone secretion in an ovarian steroid-dependent manner. This Sus scrofa (Pig) protein is Hypocretin neuropeptide precursor (HCRT).